The sequence spans 303 residues: Ribonuclease HIII (303 aa).

Residues 85–302 form the RNase H type-2 domain; the sequence is CSLIGSDEVG…TKKAYQLLKK (218 aa). The a divalent metal cation site is built by aspartate 91, glutamate 92, and aspartate 196.

The protein belongs to the RNase HII family. RnhC subfamily. The cofactor is Mn(2+). Requires Mg(2+) as cofactor.

It is found in the cytoplasm. The enzyme catalyses Endonucleolytic cleavage to 5'-phosphomonoester.. Endonuclease that specifically degrades the RNA of RNA-DNA hybrids. In Streptococcus mutans serotype c (strain ATCC 700610 / UA159), this protein is Ribonuclease HIII.